The sequence spans 100 residues: Large ribosomal subunit protein eL21 (100 aa).

Belongs to the eukaryotic ribosomal protein eL21 family.

The polypeptide is Large ribosomal subunit protein eL21 (Pyrobaculum arsenaticum (strain DSM 13514 / JCM 11321 / PZ6)).